The primary structure comprises 202 residues: MASSLILASASPRRLALLARIGIKPELVLPADIDETPKKGELPLEYVRRMATEKAEWVASRHSECHILAADTVVAAGRRILPKAEDEKQATSYLKLLSGRRHRVLTAVAMQKDDAPTTVKVSSNIVTFKSLSPREIEDYVASGEWRGKAGGYAIQGYAESFIRFLAGSHSSVMGLPLYETRHLLMNAGWPISASSSFQEEYA.

The Proton acceptor role is filled by D71.

The protein belongs to the Maf family. YhdE subfamily. A divalent metal cation serves as cofactor.

The protein resides in the cytoplasm. It carries out the reaction dTTP + H2O = dTMP + diphosphate + H(+). The catalysed reaction is UTP + H2O = UMP + diphosphate + H(+). In terms of biological role, nucleoside triphosphate pyrophosphatase that hydrolyzes dTTP and UTP. May have a dual role in cell division arrest and in preventing the incorporation of modified nucleotides into cellular nucleic acids. This chain is dTTP/UTP pyrophosphatase, found in Zymomonas mobilis subsp. mobilis (strain ATCC 31821 / ZM4 / CP4).